The following is a 250-amino-acid chain: MNKFKYLLFLVVFAVFFLTFAFFDNSSKSHQDDDEQKPIILIHDVSPVYFKELKEIVKIIDKYHYQNRSYLFLIVNHANKYNLKNYPEFVDYLHKLEKEGYHIEFHAYNHIDDEFNCNKTVAEEKLNKSFKILEECGFNPKKIKYFIPPRYKLSEDAEKLFLGRNITIILENKMITEKDGKIVEISITNREYTWYLPKPLVKVAEKIATTDYKLSIKENRKFFLSIHPKAVNYGSGLEFLDYFLNETSKN.

The chain crosses the membrane as a helical span at residues 4-24 (FKYLLFLVVFAVFFLTFAFFD).

Its subcellular location is the membrane. This is an uncharacterized protein from Methanocaldococcus jannaschii (strain ATCC 43067 / DSM 2661 / JAL-1 / JCM 10045 / NBRC 100440) (Methanococcus jannaschii).